Consider the following 163-residue polypeptide: MEQSELGFIEKVVSLNRVAKVVKGGRRFSFSALVVVGDGKGSVGFGLGKAQEVPEALRKATEQARKAMMKIPLIEGTLPYEILGEFGAGSVMLKPASRGTGIIAGGAVRAIMEAAGVTDVLAKAIGTNNPHNVLRATMAGLSALRSAQLVSNIRGKLLEAPRK.

The S5 DRBM domain occupies 8–71; sequence FIEKVVSLNR…EQARKAMMKI (64 aa).

Belongs to the universal ribosomal protein uS5 family. In terms of assembly, part of the 30S ribosomal subunit. Contacts proteins S4 and S8.

In terms of biological role, with S4 and S12 plays an important role in translational accuracy. Located at the back of the 30S subunit body where it stabilizes the conformation of the head with respect to the body. This Lawsonia intracellularis (strain PHE/MN1-00) protein is Small ribosomal subunit protein uS5.